Consider the following 208-residue polypeptide: Small ribosomal subunit protein uS5 (208 aa).

One can recognise an S5 DRBM domain in the interval 28–91; that stretch reads LEERLIYANR…EKAKKNVIRV (64 aa).

Belongs to the universal ribosomal protein uS5 family. As to quaternary structure, part of the 30S ribosomal subunit. Contacts proteins S4 and S8.

Its function is as follows. With S4 and S12 plays an important role in translational accuracy. Located at the back of the 30S subunit body where it stabilizes the conformation of the head with respect to the body. The polypeptide is Small ribosomal subunit protein uS5 (Aquifex aeolicus (strain VF5)).